Consider the following 637-residue polypeptide: Chaperone protein HtpG (637 aa).

The a; substrate-binding stretch occupies residues 1–345; sequence MSHQETHGFQ…SNDLPLNVSR (345 aa). The segment at 346–562 is b; sequence EILQDNKVTR…EGEMSSQMIK (217 aa). The interval 563–637 is c; it reads LMQAAGQPVP…VNQMLLKSVG (75 aa).

This sequence belongs to the heat shock protein 90 family. As to quaternary structure, homodimer.

The protein localises to the cytoplasm. Its function is as follows. Molecular chaperone. Has ATPase activity. The chain is Chaperone protein HtpG from Shewanella amazonensis (strain ATCC BAA-1098 / SB2B).